The sequence spans 243 residues: Flavin-dependent thymidylate synthase (243 aa).

Residues 2-207 (VKVKLINYTP…ELKPIIEWAK (206 aa)) form the ThyX domain. FAD is bound by residues serine 56, 80 to 82 (RHR), and glutamine 88. Residues 77–80 (QLVR), 88–92 (QQSQR), and arginine 146 each bind dUMP. Positions 80 to 90 (RHRIASYTQQS) match the ThyX motif motif. FAD-binding positions include 162-164 (NLR) and histidine 168. Arginine 173 contacts dUMP. Arginine 173 functions as the Involved in ionization of N3 of dUMP, leading to its activation in the catalytic mechanism.

The protein belongs to the thymidylate synthase ThyX family. Homotetramer. Requires FAD as cofactor.

The catalysed reaction is dUMP + (6R)-5,10-methylene-5,6,7,8-tetrahydrofolate + NADPH + H(+) = dTMP + (6S)-5,6,7,8-tetrahydrofolate + NADP(+). It participates in pyrimidine metabolism; dTTP biosynthesis. In terms of biological role, catalyzes the reductive methylation of 2'-deoxyuridine-5'-monophosphate (dUMP) to 2'-deoxythymidine-5'-monophosphate (dTMP) while utilizing 5,10-methylenetetrahydrofolate (mTHF) as the methyl donor, and NADPH and FADH(2) as the reductant. This chain is Flavin-dependent thymidylate synthase, found in Pyrococcus horikoshii (strain ATCC 700860 / DSM 12428 / JCM 9974 / NBRC 100139 / OT-3).